A 404-amino-acid polypeptide reads, in one-letter code: Keratin, type I cuticular Ha3-II (404 aa).

A head region spans residues 1-56 (MPYNFCLPSLSCRTSCSSRPCVPPSCHGYTLPGACNIPANVSNCNWFCEGSFNGSE). Residues 56–367 (EKETMQFLND…SLLESEDCKL (312 aa)) form the IF rod domain. The coil 1A stretch occupies residues 57 to 91 (KETMQFLNDRLASYLEKVRQLERDNAELENLIRER). The tract at residues 92–102 (SQQQEPLLCPS) is linker 1. A coil 1B region spans residues 103–203 (YQSYFKTIEE…HEQEVNTLRC (101 aa)). Residues 204–219 (QLGDRLNVEVDAAPAV) are linker 12. Positions 220-363 (DLNQVLNETR…NTYRSLLESE (144 aa)) are coil 2. A tail region spans residues 364-404 (DCKLPSNPCATTNACEKPIGSCVTNPCGPRSRCGPCNTFGY).

Belongs to the intermediate filament family.

This Homo sapiens (Human) protein is Keratin, type I cuticular Ha3-II (KRT33B).